A 352-amino-acid polypeptide reads, in one-letter code: Protein RecA (352 aa).

67 to 74 (GPESSGKT) is a binding site for ATP. The segment at 333-352 (DSTPDFAVDGNDAEETEQDF) is disordered. Over residues 343–352 (NDAEETEQDF) the composition is skewed to acidic residues.

It belongs to the RecA family.

The protein resides in the cytoplasm. In terms of biological role, can catalyze the hydrolysis of ATP in the presence of single-stranded DNA, the ATP-dependent uptake of single-stranded DNA by duplex DNA, and the ATP-dependent hybridization of homologous single-stranded DNAs. It interacts with LexA causing its activation and leading to its autocatalytic cleavage. This chain is Protein RecA, found in Klebsiella pneumoniae (strain 342).